The chain runs to 131 residues: D-ribose pyranase (131 aa).

His-20 functions as the Proton donor in the catalytic mechanism. Substrate contacts are provided by residues Asp-28, His-98, and 120–122; that span reads YSN.

It belongs to the RbsD / FucU family. RbsD subfamily. Homodecamer.

Its subcellular location is the cytoplasm. It catalyses the reaction beta-D-ribopyranose = beta-D-ribofuranose. Its pathway is carbohydrate metabolism; D-ribose degradation; D-ribose 5-phosphate from beta-D-ribopyranose: step 1/2. In terms of biological role, catalyzes the interconversion of beta-pyran and beta-furan forms of D-ribose. In Lactobacillus johnsonii (strain CNCM I-12250 / La1 / NCC 533), this protein is D-ribose pyranase.